A 487-amino-acid polypeptide reads, in one-letter code: Chromosomal replication initiator protein DnaA (487 aa).

A domain I, interacts with DnaA modulators region spans residues 1-71 (MMHDALFERF…TSLVQSEDPD (71 aa)). A domain II region spans residues 71–141 (DVLKVEILVR…QGGSGPLFGS (71 aa)). Residues 142–364 (PLDTRFTFDT…GAFNQLMFRR (223 aa)) form a domain III, AAA+ region region. 4 residues coordinate ATP: glycine 188, glycine 190, lysine 191, and threonine 192. Positions 365-487 (SFEPNLSVDR…LKRLINENNA (123 aa)) are domain IV, binds dsDNA.

The protein belongs to the DnaA family. As to quaternary structure, oligomerizes as a right-handed, spiral filament on DNA at oriC.

It is found in the cytoplasm. Its function is as follows. Plays an essential role in the initiation and regulation of chromosomal replication. ATP-DnaA binds to the origin of replication (oriC) to initiate formation of the DNA replication initiation complex once per cell cycle. Binds the DnaA box (a 9 base pair repeat at the origin) and separates the double-stranded (ds)DNA. Forms a right-handed helical filament on oriC DNA; dsDNA binds to the exterior of the filament while single-stranded (ss)DNA is stabiized in the filament's interior. The ATP-DnaA-oriC complex binds and stabilizes one strand of the AT-rich DNA unwinding element (DUE), permitting loading of DNA polymerase. After initiation quickly degrades to an ADP-DnaA complex that is not apt for DNA replication. Binds acidic phospholipids. The chain is Chromosomal replication initiator protein DnaA from Agrobacterium fabrum (strain C58 / ATCC 33970) (Agrobacterium tumefaciens (strain C58)).